A 382-amino-acid polypeptide reads, in one-letter code: MATTASNHYNLLGSGSSIVHADPGGMQQAQSYRDAQTLVQSDYTLQSNGHPLSHAHQWITALSHGDGAPWATSPLGQQDIKPTVQSSRDELHVSGTLQHQSRAPHLVHPAHGNHHGPGAWRSTGSTHLSSMASSNGQGLLYSQPSFTVNGMINPGSGQGIHHHGLRDSHDDHHGDHGHQQVSQAQQQHSQLQGGHQDHSDEDTPTSDDLEQFAKQFKQRRIKLGFTQADVGLALGTLYGNVFSQTTICRFEALQLSFKNMCKLKPLLNKWLEEADSSSGSPTSIDKIAAQGRKRKKRTSIEVSVKGALESHFLKCPKPSAPEITSLADSLQLEKEVVRVWFCNRRQKEKRMTPPGGTIPGAEDIYGASRDTPPHLGVQTSVQ.

3 disordered regions span residues 69–136 (PWAT…SSNG), 150–206 (GMIN…TPTS), and 348–382 (EKRM…TSVQ). Polar residues predominate over residues 122–136 (STGSTHLSSMASSNG). Over residues 165–178 (LRDSHDDHHGDHGH) the composition is skewed to basic and acidic residues. Residues 179–194 (QQVSQAQQQHSQLQGG) are compositionally biased toward low complexity. Positions 201–275 (EDTPTSDDLE…LLNKWLEEAD (75 aa)) constitute a POU-specific domain. A DNA-binding region (homeobox) is located at residues 293 to 352 (KRKKRTSIEVSVKGALESHFLKCPKPSAPEITSLADSLQLEKEVVRVWFCNRRQKEKRMT).

This sequence belongs to the POU transcription factor family. Class-3 subfamily. Expressed in the developing brain and spinal cord. Also found in a restricted region of the auditory vesicle during development. In the adult, expression is restricted to the brain.

The protein resides in the nucleus. In terms of biological role, transcription factor that may be implicated in patterning of the central nervous system during early development. The protein is POU domain, class 3, transcription factor 2-A (pou3f2-a) of Xenopus laevis (African clawed frog).